A 238-amino-acid polypeptide reads, in one-letter code: Type III secretion protein hrcQa (238 aa).

Positions 66 to 238 (DAEALLSLLG…SHEEHSHHEY (173 aa)) are hrcQa-C.

In terms of assembly, interacts with hrcQb.

The protein localises to the cell inner membrane. Its function is as follows. Component of the type III secretion system, which is required for effector protein delivery, parasitism, and pathogenicity. Probably participates in the formation of a C-ring-like assembly along with hrcQb. The chain is Type III secretion protein hrcQa (hrcQa) from Pseudomonas syringae pv. syringae.